A 361-amino-acid polypeptide reads, in one-letter code: Protein SSUH2 homolog (361 aa).

The protein localises to the cytoplasm. It is found in the nucleus. Plays a role in odontogenesis. In Danio rerio (Zebrafish), this protein is Protein SSUH2 homolog.